A 241-amino-acid polypeptide reads, in one-letter code: Uridylate kinase (241 aa).

15–18 (KLSG) lines the ATP pocket. The segment at 23–28 (GSEGFG) is involved in allosteric activation by GTP. Residue G57 participates in UMP binding. Residues G58 and R62 each contribute to the ATP site. UMP contacts are provided by residues D77 and 138–145 (TGNPFFTT). ATP-binding residues include T165, F171, and D174.

It belongs to the UMP kinase family. In terms of assembly, homohexamer.

The protein resides in the cytoplasm. It carries out the reaction UMP + ATP = UDP + ADP. It participates in pyrimidine metabolism; CTP biosynthesis via de novo pathway; UDP from UMP (UMPK route): step 1/1. Its activity is regulated as follows. Allosterically activated by GTP. Inhibited by UTP. Functionally, catalyzes the reversible phosphorylation of UMP to UDP. The chain is Uridylate kinase from Vibrio vulnificus (strain CMCP6).